Consider the following 757-residue polypeptide: RNA-directed RNA polymerase catalytic subunit (757 aa).

Short sequence motifs (nuclear localization signal) lie at residues 187–195 (RKRRVRDNM) and 203–216 (RTIG…NKRS). Residues 249–256 (RGFVYFVE) are promoter-binding site. Positions 286-483 (VRKMMTNSQD…GINMSKKKSY (198 aa)) constitute a RdRp catalytic domain.

Belongs to the influenza viruses polymerase PB1 family. As to quaternary structure, influenza RNA polymerase is composed of three subunits: PB1, PB2 and PA. Interacts (via N-terminus) with PA (via C-terminus). Interacts (via C-terminus) with PB2 (via N-terminus); this interaction is essential for transcription initiation. Interacts (via C-terminus) with human PKP2 (via N-terminus); the interaction competitively inhibits the interaction between the RNA polymerase subunits PB1 and PB2. In terms of processing, phosphorylated by host PRKCA.

It is found in the host nucleus. It localises to the host cytoplasm. It carries out the reaction RNA(n) + a ribonucleoside 5'-triphosphate = RNA(n+1) + diphosphate. In terms of biological role, RNA-dependent RNA polymerase which is responsible for replication and transcription of virus RNA segments. The transcription of viral mRNAs occurs by a unique mechanism called cap-snatching. 5' methylated caps of cellular mRNAs are cleaved after 10-13 nucleotides by PA. In turn, these short capped RNAs are used as primers by PB1 for transcription of viral mRNAs. During virus replication, PB1 initiates RNA synthesis and copy vRNA into complementary RNA (cRNA) which in turn serves as a template for the production of more vRNAs. The sequence is that of RNA-directed RNA polymerase catalytic subunit from Influenza A virus (strain A/Henry/1936 H1N1).